The following is a 540-amino-acid chain: NADH-ubiquinone oxidoreductase chain 4 (540 aa).

14 consecutive transmembrane segments (helical) span residues 2 to 22 (TIIAISIMNVVIGIAILGVIL), 35 to 55 (IFILGVQGILIVLSGIMLIGC), 89 to 109 (ISAIFIFLTIILILSCNLISI), 118 to 138 (QKFQIMLLLTEILIINFFAAT), 140 to 160 (LVQLYIVYEATLIPMVIMIGV), 172 to 192 (FQILIYTLIGSIFMLMSIGIL), 218 to 238 (LIFIGFFIGFAVKIPIAPLHL), 248 to 268 (PTAGSVLLAGILLKLGGYGYI), 282 to 302 (YFPIIGGICLISILYTGIATL), 310 to 330 (IVAYSSISHMNVIVLGLFSGV), 338 to 358 (IILMIGHGVVSGGLFLCIGVI), 376 to 396 (VMPIMAILFFLLVLGNIAFPI), 415 to 435 (IIIAFFSALSMIVTAIYSFWL), and 501 to 521 (VNIFEFTSISLMVIMMIIIGM).

Belongs to the complex I subunit 4 family.

The protein localises to the mitochondrion membrane. The catalysed reaction is a ubiquinone + NADH + 5 H(+)(in) = a ubiquinol + NAD(+) + 4 H(+)(out). In terms of biological role, core subunit of the mitochondrial membrane respiratory chain NADH dehydrogenase (Complex I) that is believed to belong to the minimal assembly required for catalysis. Complex I functions in the transfer of electrons from NADH to the respiratory chain. The immediate electron acceptor for the enzyme is believed to be ubiquinone. This is NADH-ubiquinone oxidoreductase chain 4 (nad4) from Dictyostelium discoideum (Social amoeba).